Here is a 280-residue protein sequence, read N- to C-terminus: Probable 2-(5''-triphosphoribosyl)-3'-dephosphocoenzyme-A synthase (280 aa).

Belongs to the CitG/MdcB family.

It carries out the reaction 3'-dephospho-CoA + ATP = 2'-(5''-triphospho-alpha-D-ribosyl)-3'-dephospho-CoA + adenine. The chain is Probable 2-(5''-triphosphoribosyl)-3'-dephosphocoenzyme-A synthase from Lactiplantibacillus plantarum (strain ATCC BAA-793 / NCIMB 8826 / WCFS1) (Lactobacillus plantarum).